Reading from the N-terminus, the 138-residue chain is Small ribosomal subunit protein uS11c (138 aa).

Positions 1 to 21 (MAKSIPKIGSRKTGRIGSRKH) are disordered. Basic residues predominate over residues 9-21 (GSRKTGRIGSRKH).

This sequence belongs to the universal ribosomal protein uS11 family. Part of the 30S ribosomal subunit.

It localises to the plastid. It is found in the chloroplast. This is Small ribosomal subunit protein uS11c from Pisum sativum (Garden pea).